The following is a 448-amino-acid chain: Proteases secretion protein PrtE (448 aa).

The Cytoplasmic segment spans residues 1–30 (MTGMDITTQDELNEAAMRDRASRDEERALR). The chain crosses the membrane as a helical span at residues 31–50 (LGWWLVLAGFGGFLLWALLA). Topologically, residues 51 to 448 (PLDKGVAVQG…DRMHLALTEE (398 aa)) are periplasmic.

This sequence belongs to the membrane fusion protein (MFP) (TC 8.A.1) family.

It is found in the cell inner membrane. In terms of biological role, involved in the secretion of proteases A, B, C and G. This Dickeya chrysanthemi (Pectobacterium chrysanthemi) protein is Proteases secretion protein PrtE (prtE).